The following is a 736-amino-acid chain: Oligopeptide transporter 6 (736 aa).

The next 15 helical transmembrane spans lie at 43-63 (MWVLGIGACIVLSFINQFFWY), 66-86 (MPLSITGISAQIAVVPLGHLM), 116-136 (VLITIFANSGAGSVYATHILS), 148-168 (FLPAFLVMITTQILGFGWAGL), 210-230 (FFLIVLVASFAYYIFPGYLFT), 258-278 (LGIGSIGFDWVTISAYLGSPL), 288-308 (VAIGFVLVMYIVTPVCYWLNI), 357-377 (FFAVTYGLGFATLSATIVHVL), 412-432 (VPLWWFLVILLLNIALIMFIS), 443-463 (WWGVLLACAIAISFTPLIGVI), 489-511 (PVANMCFKVYGYISMTQALTFIS), 527-547 (FMAQVAGTLVAVVVYTGTAWW), 602-622 (WFFLVGAIAPLLVWLATKMFP), 645-665 (ATAVNFTSWLIVAFIFGHFIF), and 678-698 (VLSGGLDAGSAFMTILLFLAL).

This sequence belongs to the oligopeptide OPT transporter (TC 2.A.67.1) family. As to expression, expressed in flowers and roots, and at a low level in leaves and stems. Detected in the cambial zone of the vascular bundles and in the region of lateral root initiation. Low expression in the vascular network of the petals and high in the stamen filaments and the gynoecium.

Its subcellular location is the membrane. In terms of biological role, involved in the translocation of tetra- and pentapeptides across the cellular membrane in an energy-dependent manner. Also involved in transport of glutathione derivatives and metal complexes, and may be involved in stress resistance. The sequence is that of Oligopeptide transporter 6 (OPT6) from Arabidopsis thaliana (Mouse-ear cress).